Consider the following 331-residue polypeptide: MRVLRNFTIFFLFTALSLFRQISASAGDLHPVYVSCVNRCIENKCHGNPSDTSKLPLDLKLFRWDCGSNCGYECEITAENYFAAHNLPSQQYHGKWYFIRVFGIQELFSVFFSMLNFMIHYNGYHIMRRCIPDEHPAKRLCLSWAIVGMNAWVWSSVFHIRDTPITEKLDYFSAGAFVLFGSYCTLILMLRLDQLPGGKLLCWIIGVIFIAAFIAHVSYLSFYSFDYGYNMKANVAVGLVQNILWYYYSWSNRNSGLYWTRWPAYIVTSLMLATSLELFDFSPIANLIDAHALWHLSTVPITHYLYGFVVRKCSYDLTKGTFKIKAYDSSR.

The first 24 residues, 1 to 24 (MRVLRNFTIFFLFTALSLFRQISA), serve as a signal peptide directing secretion. The Lumenal portion of the chain corresponds to 25–100 (SAGDLHPVYV…QYHGKWYFIR (76 aa)). The chain crosses the membrane as a helical span at residues 101–121 (VFGIQELFSVFFSMLNFMIHY). Residues 122-139 (NGYHIMRRCIPDEHPAKR) are Cytoplasmic-facing. A helical transmembrane segment spans residues 140–160 (LCLSWAIVGMNAWVWSSVFHI). Residues 161-168 (RDTPITEK) lie on the Lumenal side of the membrane. Residues 169-189 (LDYFSAGAFVLFGSYCTLILM) form a helical membrane-spanning segment. Residues 190–199 (LRLDQLPGGK) lie on the Cytoplasmic side of the membrane. A helical membrane pass occupies residues 200 to 220 (LLCWIIGVIFIAAFIAHVSYL). Residues 221–232 (SFYSFDYGYNMK) are Lumenal-facing. Residues 233–250 (ANVAVGLVQNILWYYYSW) traverse the membrane as a helical segment. Over 251–263 (SNRNSGLYWTRWP) the chain is Cytoplasmic. A helical transmembrane segment spans residues 264–284 (AYIVTSLMLATSLELFDFSPI). The Lumenal segment spans residues 285-289 (ANLID). Residues 290 to 310 (AHALWHLSTVPITHYLYGFVV) traverse the membrane as a helical segment. Residues 311 to 331 (RKCSYDLTKGTFKIKAYDSSR) are Cytoplasmic-facing.

The protein belongs to the PGAP3/PER1 family.

The protein localises to the endoplasmic reticulum membrane. Its subcellular location is the vacuole membrane. In terms of biological role, involved in the lipid remodeling steps of GPI-anchor maturation. Lipid remodeling steps consist in the generation of 2 saturated fatty chains at the sn-2 position of GPI-anchors proteins. Required for phospholipase A2 activity that removes an acyl-chain at the sn-2 position of GPI-anchors during the remodeling of GPI. Required for efficient transport of GPI-anchor proteins. The chain is Protein PER1 homolog from Schizosaccharomyces pombe (strain 972 / ATCC 24843) (Fission yeast).